The following is a 333-amino-acid chain: Fructose-1,6-bisphosphatase class 1 (333 aa).

Residues E89, D110, L112, and D113 each contribute to the Mg(2+) site. Residues 113 to 116 (DGSS), N206, Y239, 257 to 259 (YLY), and K269 each bind substrate. E275 is a Mg(2+) binding site.

The protein belongs to the FBPase class 1 family. In terms of assembly, homotetramer. Mg(2+) is required as a cofactor.

It localises to the cytoplasm. It catalyses the reaction beta-D-fructose 1,6-bisphosphate + H2O = beta-D-fructose 6-phosphate + phosphate. Its pathway is carbohydrate biosynthesis; gluconeogenesis. The protein is Fructose-1,6-bisphosphatase class 1 of Sodalis glossinidius (strain morsitans).